A 530-amino-acid polypeptide reads, in one-letter code: 4,4'-diapolycopene aldehyde oxidase (530 aa).

Active-site residues include Glu-234 and Cys-268.

The protein belongs to the aldehyde dehydrogenase family.

It catalyses the reaction all-trans-4,4'-diapolycopen-4-al + A + H2O = all-trans-4,4'-diapolycopen-4-oate + AH2 + H(+). The enzyme catalyses all-trans-4,4'-diapolycopene-4,4'-dial + 2 A + 2 H2O = all-trans-4,4'-diapolycopene-4,4'-dioate + 2 AH2 + 2 H(+). The protein operates within carotenoid biosynthesis. Functionally, involved in the biosynthesis of C30 carotenoids. Catalyzes the oxidation of 4,4'-diapolycopene-4,4'-dial to yield 4,4'-diapolycopene-4,4'-dioic acid. Also able to catalyze the oxidation of 4,4'-diapolycopen-4-al to yield 4,4'-diapolycopen-4-oic acid. This is 4,4'-diapolycopene aldehyde oxidase from Methylomonas sp.